The following is a 210-amino-acid chain: Proteasome subunit beta (210 aa).

Positions methionine 1 to glycine 9 are cleaved as a propeptide — removed in mature form; by autocatalysis. Catalysis depends on threonine 10, which acts as the Nucleophile.

The protein belongs to the peptidase T1B family. As to quaternary structure, the 20S proteasome core is composed of 14 alpha and 14 beta subunits that assemble into four stacked heptameric rings, resulting in a barrel-shaped structure. The two inner rings, each composed of seven catalytic beta subunits, are sandwiched by two outer rings, each composed of seven alpha subunits. The catalytic chamber with the active sites is on the inside of the barrel. Has a gated structure, the ends of the cylinder being occluded by the N-termini of the alpha-subunits. Is capped at one or both ends by the proteasome regulatory ATPase, PAN.

The protein resides in the cytoplasm. The enzyme catalyses Cleavage of peptide bonds with very broad specificity.. With respect to regulation, the formation of the proteasomal ATPase PAN-20S proteasome complex, via the docking of the C-termini of PAN into the intersubunit pockets in the alpha-rings, triggers opening of the gate for substrate entry. Interconversion between the open-gate and close-gate conformations leads to a dynamic regulation of the 20S proteasome proteolysis activity. Its function is as follows. Component of the proteasome core, a large protease complex with broad specificity involved in protein degradation. The chain is Proteasome subunit beta from Methanosarcina mazei (strain ATCC BAA-159 / DSM 3647 / Goe1 / Go1 / JCM 11833 / OCM 88) (Methanosarcina frisia).